The following is a 425-amino-acid chain: Phosphomethylpyrimidine synthase (425 aa).

Residues Met-94, Tyr-123, His-162, 184-186, 225-228, and Glu-264 each bind substrate; these read SRG and NGMR. Residue His-268 coordinates Zn(2+). Residue Tyr-291 coordinates substrate. His-332 is a binding site for Zn(2+). [4Fe-4S] cluster is bound by residues Cys-407, Cys-410, and Cys-414.

This sequence belongs to the ThiC family. Requires [4Fe-4S] cluster as cofactor.

The enzyme catalyses 5-amino-1-(5-phospho-beta-D-ribosyl)imidazole + S-adenosyl-L-methionine = 4-amino-2-methyl-5-(phosphooxymethyl)pyrimidine + CO + 5'-deoxyadenosine + formate + L-methionine + 3 H(+). It functions in the pathway cofactor biosynthesis; thiamine diphosphate biosynthesis. In terms of biological role, catalyzes the synthesis of the hydroxymethylpyrimidine phosphate (HMP-P) moiety of thiamine from aminoimidazole ribotide (AIR) in a radical S-adenosyl-L-methionine (SAM)-dependent reaction. In Methanoregula boonei (strain DSM 21154 / JCM 14090 / 6A8), this protein is Phosphomethylpyrimidine synthase.